The following is a 456-amino-acid chain: Phosphomethylpyrimidine synthase (456 aa).

Substrate-binding positions include Asn80, Met109, Tyr139, His175, 195 to 197, 236 to 239, and Glu275; these read SRG and DSLR. His279 serves as a coordination point for Zn(2+). Residue Tyr302 coordinates substrate. Residue His343 participates in Zn(2+) binding. [4Fe-4S] cluster is bound by residues Cys423, Cys426, and Cys431.

The protein belongs to the ThiC family. [4Fe-4S] cluster serves as cofactor.

It carries out the reaction 5-amino-1-(5-phospho-beta-D-ribosyl)imidazole + S-adenosyl-L-methionine = 4-amino-2-methyl-5-(phosphooxymethyl)pyrimidine + CO + 5'-deoxyadenosine + formate + L-methionine + 3 H(+). It participates in cofactor biosynthesis; thiamine diphosphate biosynthesis. In terms of biological role, catalyzes the synthesis of the hydroxymethylpyrimidine phosphate (HMP-P) moiety of thiamine from aminoimidazole ribotide (AIR) in a radical S-adenosyl-L-methionine (SAM)-dependent reaction. This Prochlorococcus marinus (strain MIT 9312) protein is Phosphomethylpyrimidine synthase.